Consider the following 671-residue polypeptide: Transcriptional regulator Kaiso (671 aa).

The tract at residues 1–103 (MESRKLISAT…RADLLDELIK (103 aa)) is interaction with NCOR1. Positions 1–136 (MESRKLISAT…SGTEQDGTAE (136 aa)) are self-association. Residues 32-94 (CDVTVIVEDR…IYSSKVVRVR (63 aa)) enclose the BTB domain. Over residues 127 to 144 (SGTEQDGTAETLPSSSSD) the composition is skewed to polar residues. The interval 127–161 (SGTEQDGTAETLPSSSSDKSLDMEKSKDEAQDNGA) is disordered. The segment covering 145–156 (KSLDMEKSKDEA) has biased composition (basic and acidic residues). Residues K151 and K153 each participate in a glycyl lysine isopeptide (Lys-Gly) (interchain with G-Cter in SUMO2) cross-link. Position 251 is a phosphothreonine (T251). Positions 298-571 (LPNHMSSSVN…FMSSHIKSVH (274 aa)) are interaction with CBFA2T3. The segment at 332–365 (IIDDDDDIISSSPDSAVSNTSLVPQADNSKSTTL) is disordered. The span at 347 to 365 (AVSNTSLVPQADNSKSTTL) shows a compositional bias: polar residues. Glycyl lysine isopeptide (Lys-Gly) (interchain with G-Cter in SUMO2) cross-links involve residues K388, K405, K412, and K447. A compositionally biased stretch (basic and acidic residues) spans 451 to 461 (DGGEAKLDNEL). The disordered stretch occupies residues 451–474 (DGGEAKLDNELPKTSGSEPPNKRM). The interaction with CTNND1 stretch occupies residues 452–671 (GGEAKLDNEL…EFEFIIPESY (220 aa)). Glycyl lysine isopeptide (Lys-Gly) (interchain with G-Cter in SUMO2) cross-links involve residues K463, K472, and K477. A Nuclear localization signal motif is present at residues 469 to 478 (PPNKRMKVKH). 3 C2H2-type zinc fingers span residues 492–514 (YICI…FNIH), 520–542 (YQCR…EIHH), and 548–571 (YQCL…KSVH). The tract at residues 512-637 (NIHSWEKKYQ…TSTPPQNKST (126 aa)) is required for DNA-binding. Residues K537, K568, K580, K609, and K616 each participate in a glycyl lysine isopeptide (Lys-Gly) (interchain with G-Cter in SUMO2) cross-link.

As to quaternary structure, interacts with NCOR1. Self-associates. Interacts with CTNND1, and this interaction inhibits binding to both methylated and non-methylated DNA. Interacts with CTNND2. Interacts with KPNA2/RCH1, which may mediate nuclear import of this protein. Interacts with CBFA2T3. Expressed in brain, heart, kidney, liver, lung, neuromuscular junctions, skeletal muscle, spleen and testis.

It is found in the nucleus. In terms of biological role, transcriptional regulator with bimodal DNA-binding specificity. Binds to methylated CpG dinucleotides in the consensus sequence 5'-CGCG-3' and also binds to the non-methylated consensus sequence 5'-CTGCNA-3' also known as the consensus kaiso binding site (KBS). May recruit the N-CoR repressor complex to promote histone deacetylation and the formation of repressive chromatin structures in target gene promoters. Contributes to the repression of target genes of the Wnt signaling pathway. May also activate transcription of a subset of target genes by the recruitment of CTNND2. Represses expression of MMP7 in conjunction with transcriptional corepressors CBFA2T3, CBFA2T2 and RUNX1T1. This chain is Transcriptional regulator Kaiso (Zbtb33), found in Mus musculus (Mouse).